Consider the following 1087-residue polypeptide: Platelet-derived growth factor receptor alpha (1087 aa).

Positions 1–24 (MMPAMRASLILGCLLIIGPWAILA) are cleaved as a signal peptide. The Extracellular segment spans residues 25 to 530 (ENPLPTIFPD…PTLRSELTVA (506 aa)). Ig-like C2-type domains lie at 27-114 (PLPT…SEIE) and 118-211 (IYIY…LQTW). An intrachain disulfide couples Cys-50 to Cys-101. Residues Asn-77 and Asn-104 are each glycosylated (N-linked (GlcNAc...) asparagine). Cys-151 and Cys-192 form a disulfide bridge. 7 N-linked (GlcNAc...) asparagine glycosylation sites follow: Asn-216, Asn-282, Asn-309, Asn-356, Asn-362, Asn-461, and Asn-471. Ig-like C2-type domains lie at 217–309 (ISVE…KKTN), 315–409 (KGFI…KSYS), and 417–519 (PALI…LKLV). A disulfide bridge links Cys-238 with Cys-293. Cysteines 438 and 503 form a disulfide. Residues 531–551 (AAVLVLLVIVIISLIVLVIIW) traverse the membrane as a helical segment. Residues 552-1087 (KQKPRYEIRW…SSDLVEDSFL (536 aa)) are Cytoplasmic-facing. 2 positions are modified to phosphotyrosine; by autocatalysis: Tyr-574 and Tyr-576. Residues 595–970 (LVLGRILGSG…CYETVLHDFL (376 aa)) enclose the Protein kinase domain. Residues 601 to 609 (LGSGAFGKV) and Lys-629 each bind ATP. A phosphotyrosine; by autocatalysis mark is found at Tyr-722, Tyr-733, Tyr-744, Tyr-756, and Tyr-764. Asp-818 (proton acceptor) is an active-site residue. 3 positions are modified to phosphotyrosine; by autocatalysis: Tyr-849, Tyr-988, and Tyr-1017. Positions 1017-1064 (YIIPLPDIDPVSEDESGKRNRHSSQTSEESAIETGSSSSTFIKRDDET) are disordered. A compositionally biased stretch (polar residues) spans 1039-1057 (SSQTSEESAIETGSSSSTF).

The protein belongs to the protein kinase superfamily. Tyr protein kinase family. CSF-1/PDGF receptor subfamily. Interacts with homodimeric pdgfa, pdgfb and pdgfc, and with heterodimers formed by pdgfa and pdgfb. Monomer in the absence of bound ligand. Interaction with dimeric pdgfa, pdgfb and/or pdgfc leads to receptor dimerization, where both pdgfra homodimers and heterodimers with pdgfrb are observed. Ubiquitinated, leading to its internalization and degradation. Post-translationally, autophosphorylated on tyrosine residues upon ligand binding. Autophosphorylation occurs in trans, i.e. one subunit of the dimeric receptor phosphorylates tyrosine residues on the other subunit.

Its subcellular location is the cell membrane. It localises to the cell projection. The protein resides in the cilium. It is found in the golgi apparatus. The catalysed reaction is L-tyrosyl-[protein] + ATP = O-phospho-L-tyrosyl-[protein] + ADP + H(+). Its activity is regulated as follows. Present in an inactive conformation in the absence of bound ligand. Binding of pdgfa and/or pdgfb leads to dimerization and activation by autophosphorylation on tyrosine residues. Its function is as follows. Tyrosine-protein kinase that acts as a cell-surface receptor for pdgfa, pdgfb and pdgfc and plays an essential role in the regulation of embryonic development, cell proliferation, survival and chemotaxis. Depending on the context, promotes or inhibits cell proliferation and cell migration. Plays an important role in the differentiation of bone marrow-derived mesenchymal stem cells. Required for normal skeleton development. Required for normal development of the gastrointestinal tract. Plays a role in cell migration and chemotaxis in wound healing. Plays a role in platelet activation, secretion of agonists from platelet granules, and in thrombin-induced platelet aggregation. Binding of its cognate ligands - homodimeric pdgfa, homodimeric pdgfb, heterodimers formed by pdgfa and pdgfb or homodimeric pdgfc -leads to the activation of several signaling cascades; the response depends on the nature of the bound ligand and is modulated by the formation of heterodimers between pdgfra and pdgfrb. Phosphorylates pik3r1, plcg1, and ptpn11. Activation of plcg1 leads to the production of the cellular signaling molecules diacylglycerol and inositol 1,4,5-trisphosphate, mobilization of cytosolic Ca(2+) and the activation of protein kinase C. Phosphorylates pik3r1, the regulatory subunit of phosphatidylinositol 3-kinase, and thereby mediates activation of the akt1 signaling pathway. Mediates activation of hras and of the MAP kinases mapk1/erk2 and/or mapk3/erk1. Promotes activation of stat family members stat1, stat3 and stat5a and/or stat5b. Receptor signaling is down-regulated by protein phosphatases that dephosphorylate the receptor and its down-stream effectors, and by rapid internalization of the activated receptor. The sequence is that of Platelet-derived growth factor receptor alpha (pdgfra) from Xenopus laevis (African clawed frog).